The following is a 612-amino-acid chain: Methionine--tRNA ligase (612 aa).

Positions 12 to 22 match the 'HIGH' region motif; sequence PYANGPRHIGH. 4 residues coordinate Zn(2+): cysteine 144, cysteine 147, cysteine 157, and cysteine 160. The 'KMSKS' region motif lies at 350 to 354; the sequence is KFSSS. Serine 353 provides a ligand contact to ATP. A disordered region spans residues 580-612; it reads IQPGTQLSKPKPLFPKLDPELAETGPEWAPVQK.

Belongs to the class-I aminoacyl-tRNA synthetase family. MetG type 1 subfamily. In terms of assembly, monomer. Zn(2+) serves as cofactor.

It localises to the cytoplasm. It carries out the reaction tRNA(Met) + L-methionine + ATP = L-methionyl-tRNA(Met) + AMP + diphosphate. Functionally, is required not only for elongation of protein synthesis but also for the initiation of all mRNA translation through initiator tRNA(fMet) aminoacylation. The chain is Methionine--tRNA ligase from Corynebacterium jeikeium (strain K411).